Here is a 563-residue protein sequence, read N- to C-terminus: Cytidine monophosphate-N-acetylneuraminic acid hydroxylase (563 aa).

The Rieske domain maps to Leu10 to Phe108. [2Fe-2S] cluster-binding residues include Cys50, His52, Cys71, and His74.

This sequence belongs to the CMP-Neu5Ac hydroxylase family. Requires [2Fe-2S] cluster as cofactor.

The protein resides in the cytoplasm. The catalysed reaction is CMP-N-acetyl-beta-neuraminate + 2 Fe(II)-[cytochrome b5] + O2 + 2 H(+) = CMP-N-glycoloyl-beta-neuraminate + 2 Fe(III)-[cytochrome b5] + H2O. Its pathway is amino-sugar metabolism; N-acetylneuraminate metabolism. Functionally, sialic acids are components of carbohydrate chains of glycoconjugates and are involved in cell-cell recognition and cell-pathogen interactions. Catalyzes the conversion of CMP-N-acetylneuraminic acid (CMP-Neu5Ac) into its hydroxylated derivative CMP-N-glycolylneuraminic acid (CMP-Neu5Gc), a sialic acid abundantly expressed at the surface of many cells. This Cricetulus griseus (Chinese hamster) protein is Cytidine monophosphate-N-acetylneuraminic acid hydroxylase (CMAH).